The chain runs to 152 residues: Ribosome maturation factor RimP (152 aa).

It belongs to the RimP family.

The protein resides in the cytoplasm. In terms of biological role, required for maturation of 30S ribosomal subunits. This is Ribosome maturation factor RimP from Desulfitobacterium hafniense (strain DSM 10664 / DCB-2).